Here is a 234-residue protein sequence, read N- to C-terminus: 3-deoxy-manno-octulosonate cytidylyltransferase (234 aa).

Belongs to the KdsB family.

The protein localises to the cytoplasm. It carries out the reaction 3-deoxy-alpha-D-manno-oct-2-ulosonate + CTP = CMP-3-deoxy-beta-D-manno-octulosonate + diphosphate. It participates in nucleotide-sugar biosynthesis; CMP-3-deoxy-D-manno-octulosonate biosynthesis; CMP-3-deoxy-D-manno-octulosonate from 3-deoxy-D-manno-octulosonate and CTP: step 1/1. The protein operates within bacterial outer membrane biogenesis; lipopolysaccharide biosynthesis. Its function is as follows. Activates KDO (a required 8-carbon sugar) for incorporation into bacterial lipopolysaccharide in Gram-negative bacteria. This is 3-deoxy-manno-octulosonate cytidylyltransferase from Aquifex aeolicus (strain VF5).